The chain runs to 424 residues: Serine--tRNA ligase (424 aa).

An L-serine-binding site is contributed by 230–232 (TAE). 261 to 263 (RSE) serves as a coordination point for ATP. An L-serine-binding site is contributed by Glu-284. Residue 348–351 (EISS) coordinates ATP. An L-serine-binding site is contributed by Ser-384.

Belongs to the class-II aminoacyl-tRNA synthetase family. Type-1 seryl-tRNA synthetase subfamily. As to quaternary structure, homodimer. The tRNA molecule binds across the dimer.

Its subcellular location is the cytoplasm. The enzyme catalyses tRNA(Ser) + L-serine + ATP = L-seryl-tRNA(Ser) + AMP + diphosphate + H(+). The catalysed reaction is tRNA(Sec) + L-serine + ATP = L-seryl-tRNA(Sec) + AMP + diphosphate + H(+). The protein operates within aminoacyl-tRNA biosynthesis; selenocysteinyl-tRNA(Sec) biosynthesis; L-seryl-tRNA(Sec) from L-serine and tRNA(Sec): step 1/1. Its function is as follows. Catalyzes the attachment of serine to tRNA(Ser). Is also able to aminoacylate tRNA(Sec) with serine, to form the misacylated tRNA L-seryl-tRNA(Sec), which will be further converted into selenocysteinyl-tRNA(Sec). The sequence is that of Serine--tRNA ligase from Streptococcus pneumoniae (strain ATCC 700669 / Spain 23F-1).